The primary structure comprises 1694 residues: Homeobox-DDT domain protein RLT2 (1694 aa).

The disordered stretch occupies residues Met-1–Lys-24. A DNA-binding region (homeobox) is located at residues Ser-17–Thr-76. The DDT domain occupies Asp-514–Gly-573. One can recognise an HTH HARE-type domain in the interval Gly-696 to Ser-765. Residues Glu-795–Val-816 are compositionally biased toward acidic residues. Disordered stretches follow at residues Glu-795–Lys-822, Lys-1450–Glu-1541, Ala-1555–Lys-1639, and Glu-1655–Arg-1674. Phosphoserine is present on residues Ser-806 and Ser-808. Over residues Gly-1459 to Gly-1470 the composition is skewed to gly residues. Basic residues-rich tracts occupy residues Arg-1471–Gly-1485 and Gly-1515–Pro-1531. Acidic residues-rich tracts occupy residues Asp-1561 to Glu-1578, Glu-1589 to Gly-1605, and Asp-1624 to Asp-1635.

In terms of assembly, interacts with CHR11. Interacts (via the DDT domain) with CHR11 (via C-terminus). As to expression, highly expressed in growing tissues such as inflorescence and flower meristems, young leaves and floral organs. Expressed in roots, rosette and cauline leaves, stems, flowers, inflorescences and siliques.

The protein resides in the nucleus. Transcriptional regulator required for the maintenance of the plant vegetative phase. In association with CHR11 or CHR17 may prevent the early activation of the vegetative-to-reproductive transition by regulating key genes that contribute to flower timing, such as FT, SEP1, SEP3, AGL8/FUL, SOC1 and FLC. Involved in the transcriptional regulation of seed-specific gene expression. This Arabidopsis thaliana (Mouse-ear cress) protein is Homeobox-DDT domain protein RLT2.